A 453-amino-acid chain; its full sequence is MDRRIFGIENEYGVTCTFKGQRRLSPDEVARYLFRKVVSWGRSSNVFLRNGARLYLDVGSHPEYATPECDDVVELVTHDKAGERVLEGLLLDAEQRLHDEGIAGEIYLFKNNTDSAGNSYGCHENYLVSRAGEFSRLADVLIPFLVTRQIIVGAGKITQTPRGASYSVSQRAEHIWEGVSSATTRSRPIINTRDEPHADAEKYRRLHVIVGDSNMSETTTMLKVASCDLVLRMIEEGVVMRDLTMENPIRAIREISHDVTGRRKVRLANGREASALDIQQEYLTKARDFVDRRELSTPLIEQALDLWERGLKAVEADDLGLVDREIDWVIKWKLIERYRAKHGLPLGHPRIAQLDLAYHDIHRGRGLYYLLEKRGAVARVTTDLKIFEAKSVPPQTTRARLRGEFIRRAQERRRDFTVDWVHLKLNDQAQRTVLCKDPFRAHDERVQRLIDGM.

Glu-9 contacts Mg(2+). Arg-53 provides a ligand contact to ATP. Mg(2+) is bound at residue Tyr-55. The Proton acceptor role is filled by Asp-57. Glu-63 contributes to the Mg(2+) binding site. 2 residues coordinate ATP: Thr-66 and Trp-420.

This sequence belongs to the Pup ligase/Pup deamidase family. Pup-conjugating enzyme subfamily.

The enzyme catalyses ATP + [prokaryotic ubiquitin-like protein]-L-glutamate + [protein]-L-lysine = ADP + phosphate + N(6)-([prokaryotic ubiquitin-like protein]-gamma-L-glutamyl)-[protein]-L-lysine.. Its pathway is protein degradation; proteasomal Pup-dependent pathway. It functions in the pathway protein modification; protein pupylation. Its function is as follows. Catalyzes the covalent attachment of the prokaryotic ubiquitin-like protein modifier Pup to the proteasomal substrate proteins, thereby targeting them for proteasomal degradation. This tagging system is termed pupylation. The ligation reaction involves the side-chain carboxylate of the C-terminal glutamate of Pup and the side-chain amino group of a substrate lysine. The chain is Pup--protein ligase from Nocardioides sp. (strain ATCC BAA-499 / JS614).